We begin with the raw amino-acid sequence, 317 residues long: Serpentine receptor class delta-44 (317 aa).

6 helical membrane passes run 5–25, 90–110, 130–150, 185–205, 235–255, and 264–284; these read ILSV…IILI, MFHI…LTTF, ILFI…LVII, RVNG…CLLL, IFGH…SLIT, and FFIF…TMYF.

Belongs to the nematode receptor-like protein srd family.

The protein localises to the membrane. This Caenorhabditis elegans protein is Serpentine receptor class delta-44 (srd-44).